Reading from the N-terminus, the 103-residue chain is Carboxysome shell protein CsoS1 (103 aa).

The BMC domain maps to 9-94; sequence ALGMIETRGL…PHREVEPALG (86 aa).

Belongs to the bacterial microcompartments protein family. CsoS1 subfamily. As to quaternary structure, homohexamer with a small central pore. Forms a CsoS2-CsoS1-RuBisCO complex.

Its subcellular location is the carboxysome. Functionally, one of the shell proteins of the carboxysome, a polyhedral inclusion where RuBisCO (ribulose bisphosphate carboxylase, ccbL-ccbS) is sequestered. Assembles into hexamers which make sheets that form the facets of the polyhedral carboxysome. The sequence is that of Carboxysome shell protein CsoS1 from Prochlorococcus marinus (strain MIT 9313).